The following is a 330-amino-acid chain: ADP-L-glycero-D-manno-heptose-6-epimerase (330 aa).

Residues 11–12, 32–33, Lys39, Lys54, 75–79, and Asn92 contribute to the NADP(+) site; these read FI, DN, and EGACS. Tyr139 functions as the Proton acceptor in the catalytic mechanism. Lys143 lines the NADP(+) pocket. Residue Asn168 coordinates substrate. NADP(+)-binding residues include Val169 and Lys177. Lys177 serves as the catalytic Proton acceptor. Residues Arg179, His186, 200-203, Arg213, and Tyr292 contribute to the substrate site; that span reads FGEY.

This sequence belongs to the NAD(P)-dependent epimerase/dehydratase family. HldD subfamily. Homopentamer. It depends on NADP(+) as a cofactor.

The enzyme catalyses ADP-D-glycero-beta-D-manno-heptose = ADP-L-glycero-beta-D-manno-heptose. It functions in the pathway nucleotide-sugar biosynthesis; ADP-L-glycero-beta-D-manno-heptose biosynthesis; ADP-L-glycero-beta-D-manno-heptose from D-glycero-beta-D-manno-heptose 7-phosphate: step 4/4. In terms of biological role, catalyzes the interconversion between ADP-D-glycero-beta-D-manno-heptose and ADP-L-glycero-beta-D-manno-heptose via an epimerization at carbon 6 of the heptose. The chain is ADP-L-glycero-D-manno-heptose-6-epimerase from Burkholderia vietnamiensis (strain G4 / LMG 22486) (Burkholderia cepacia (strain R1808)).